Reading from the N-terminus, the 493-residue chain is Ribonuclease Y (493 aa).

A helical transmembrane segment spans residues 19–39 (IFAILFLIIVILNLGLLVFLA). A KH domain is found at 172–241 (SASFTVIESD…LTIRNILIND (70 aa)). Positions 300 to 392 (VLSHCLETGF…TQIGDKLSAG (93 aa)) constitute an HD domain.

This sequence belongs to the RNase Y family.

It localises to the cell membrane. Functionally, endoribonuclease that initiates mRNA decay. The protein is Ribonuclease Y of Mycoplasma pneumoniae (strain ATCC 29342 / M129 / Subtype 1) (Mycoplasmoides pneumoniae).